The chain runs to 855 residues: Protein translocase subunit SecA (855 aa).

ATP contacts are provided by residues Gln-88, 106–110 (GEGKT), and Asp-509. Residues 815 to 837 (EANLQNKFEKKPARNEPCPCGSG) form a disordered region. Positions 832, 834, 843, and 844 each coordinate Zn(2+).

It belongs to the SecA family. As to quaternary structure, monomer and homodimer. Part of the essential Sec protein translocation apparatus which comprises SecA, SecYEG and auxiliary proteins SecDF-YajC and YidC. Zn(2+) is required as a cofactor.

Its subcellular location is the cell inner membrane. The protein resides in the cytoplasm. The catalysed reaction is ATP + H2O + cellular proteinSide 1 = ADP + phosphate + cellular proteinSide 2.. Part of the Sec protein translocase complex. Interacts with the SecYEG preprotein conducting channel. Has a central role in coupling the hydrolysis of ATP to the transfer of proteins into and across the cell membrane, serving as an ATP-driven molecular motor driving the stepwise translocation of polypeptide chains across the membrane. The protein is Protein translocase subunit SecA of Campylobacter fetus subsp. fetus (strain 82-40).